A 159-amino-acid chain; its full sequence is 4-deoxy-4-sulfo-D-erythrose isomerase (159 aa).

Cysteine 66 functions as the Proton acceptor in the catalytic mechanism.

Belongs to the LacAB/RpiB family.

It catalyses the reaction 4-deoxy-4-sulfo-D-erythrose = 4-deoxy-4-sulfo-D-erythrulose. In terms of biological role, part of the sulfo-TK pathway, a D-sulfoquinovose degradation pathway that produces 2-hydroxyethane-1-sulfonate (isethionate). Catalyzes the isomerization of 4-deoxy-4-sulfo-D-erythrose (SE) to 4-deoxy-4-sulfo-D-erythrulose (SEu). The protein is 4-deoxy-4-sulfo-D-erythrose isomerase of Clostridium sp. (strain MSTE9).